A 558-amino-acid chain; its full sequence is Potassium-transporting ATPase potassium-binding subunit (558 aa).

11 consecutive transmembrane segments (helical) span residues 1–21, 58–78, 85–105, 130–150, 179–199, 245–265, 279–299, 374–394, 416–436, 484–504, and 527–547; these read MDTL…VLVH, WPAY…VVYG, FLPY…NTAV, GLAV…IALV, LSLV…FAGF, PTAW…FSLP, TAIA…LTLF, GLYG…LLVG, ILVT…IPAV, ALGV…LALA, and FVGL…FPVL.

This sequence belongs to the KdpA family. In terms of assembly, the system is composed of three essential subunits: KdpA, KdpB and KdpC.

The protein localises to the cell membrane. Functionally, part of the high-affinity ATP-driven potassium transport (or Kdp) system, which catalyzes the hydrolysis of ATP coupled with the electrogenic transport of potassium into the cytoplasm. This subunit binds the extracellular potassium ions and delivers the ions to the membrane domain of KdpB through an intramembrane tunnel. The polypeptide is Potassium-transporting ATPase potassium-binding subunit (Clavibacter sepedonicus (Clavibacter michiganensis subsp. sepedonicus)).